A 555-amino-acid chain; its full sequence is DNA repair and recombination protein rhm52 (555 aa).

The DNA-binding element occupies 148 to 152 (KRALR). Disordered stretches follow at residues 197 to 232 (VVAE…DSFD) and 251 to 555 (HPDE…MKLN). Over residues 260–276 (NSHASGSSGNTGASTTN) the composition is skewed to low complexity. Composition is skewed to polar residues over residues 283-300 (SGNQ…SRMN) and 312-334 (TPNH…QNNH). Composition is skewed to low complexity over residues 354–375 (NNNN…GPQQ) and 382–404 (NGAA…AVAR). Polar residues predominate over residues 468–478 (DNPSNNAGNGV). Low complexity predominate over residues 479-490 (QNQPQKPQPSQQ). Positions 491–500 (RGSILNPQFD) are enriched in polar residues. Residues 536 to 547 (PNGTSNGNGTPG) show a composition bias toward low complexity.

Belongs to the RAD52 family. Part of a complex that includes RAD51, RAD52 and RAD59.

It is found in the nucleus. In terms of biological role, involved in DNA double-strand break (DSB) repair and recombination. Promotes the annealing of complementary single-stranded DNA and by stimulation of the RAD51 recombinase. The polypeptide is DNA repair and recombination protein rhm52 (RHM52) (Pyricularia oryzae (strain 70-15 / ATCC MYA-4617 / FGSC 8958) (Rice blast fungus)).